Here is a 250-residue protein sequence, read N- to C-terminus: Small ribosomal subunit protein uS2 (250 aa).

Residues 226-250 (DQQNRQELGEDLGAAVEPAAEEALA) form a disordered region. Residues 239 to 250 (AAVEPAAEEALA) are compositionally biased toward low complexity.

The protein belongs to the universal ribosomal protein uS2 family.

This is Small ribosomal subunit protein uS2 (rpsB) from Zymomonas mobilis subsp. mobilis (strain ATCC 31821 / ZM4 / CP4).